The following is a 24-amino-acid chain: Humanin-like 12 (24 aa).

This sequence belongs to the humanin family.

Its subcellular location is the secreted. It localises to the cytoplasm. Plays a role as a neuroprotective and antiapoptotic factor. The sequence is that of Humanin-like 12 from Homo sapiens (Human).